Reading from the N-terminus, the 213-residue chain is Protein-L-isoaspartate O-methyltransferase (213 aa).

Ser58 is a catalytic residue.

Belongs to the methyltransferase superfamily. L-isoaspartyl/D-aspartyl protein methyltransferase family.

It localises to the cytoplasm. The catalysed reaction is [protein]-L-isoaspartate + S-adenosyl-L-methionine = [protein]-L-isoaspartate alpha-methyl ester + S-adenosyl-L-homocysteine. Catalyzes the methyl esterification of L-isoaspartyl residues in peptides and proteins that result from spontaneous decomposition of normal L-aspartyl and L-asparaginyl residues. It plays a role in the repair and/or degradation of damaged proteins. In Chlorobaculum tepidum (strain ATCC 49652 / DSM 12025 / NBRC 103806 / TLS) (Chlorobium tepidum), this protein is Protein-L-isoaspartate O-methyltransferase.